Reading from the N-terminus, the 410-residue chain is Sorting nexin-4 (410 aa).

A PX domain is found at 11-135 (FIIVSDPQKQ…TFLVSSDWDA (125 aa)). Positions 58, 60, 84, and 101 each coordinate a 1,2-diacyl-sn-glycero-3-phospho-(1D-myo-inositol-3-phosphate). Positions 329–368 (NQEAARREKISKLESKVQALTTEVENAKKVADAFEKEALK) form a coiled coil.

It belongs to the sorting nexin family.

It localises to the cytoplasm. It is found in the cytosol. The protein localises to the preautophagosomal structure membrane. The protein resides in the endosome membrane. In terms of biological role, sorting nexin, involved in the separation or division of vacuoles throughout the entire life cycle of the cells. Involved in retrieval of late-Golgi SNAREs from post-Golgi endosomes to the trans-Golgi network, for cytoplasm to vacuole transport (Cvt), and autophagy of large cargos including mitophagy, pexophagy and glycophagy. This chain is Sorting nexin-4 (SNX4), found in Eremothecium gossypii (strain ATCC 10895 / CBS 109.51 / FGSC 9923 / NRRL Y-1056) (Yeast).